A 78-amino-acid chain; its full sequence is UPF0401 protein YubL (78 aa).

This sequence belongs to the UPF0401 family.

This Salmonella typhi protein is UPF0401 protein YubL (yubL).